The chain runs to 404 residues: CCA-adding enzyme (404 aa).

Glycine 27 and arginine 30 together coordinate ATP. The CTP site is built by glycine 27 and arginine 30. Residues aspartate 40 and aspartate 42 each contribute to the Mg(2+) site. Residues arginine 111, aspartate 154, arginine 157, arginine 160, and arginine 163 each contribute to the ATP site. 5 residues coordinate CTP: arginine 111, aspartate 154, arginine 157, arginine 160, and arginine 163.

Belongs to the tRNA nucleotidyltransferase/poly(A) polymerase family. Bacterial CCA-adding enzyme type 3 subfamily. In terms of assembly, homodimer. Mg(2+) is required as a cofactor.

It catalyses the reaction a tRNA precursor + 2 CTP + ATP = a tRNA with a 3' CCA end + 3 diphosphate. It carries out the reaction a tRNA with a 3' CCA end + 2 CTP + ATP = a tRNA with a 3' CCACCA end + 3 diphosphate. Catalyzes the addition and repair of the essential 3'-terminal CCA sequence in tRNAs without using a nucleic acid template. Adds these three nucleotides in the order of C, C, and A to the tRNA nucleotide-73, using CTP and ATP as substrates and producing inorganic pyrophosphate. tRNA 3'-terminal CCA addition is required both for tRNA processing and repair. Also involved in tRNA surveillance by mediating tandem CCA addition to generate a CCACCA at the 3' terminus of unstable tRNAs. While stable tRNAs receive only 3'-terminal CCA, unstable tRNAs are marked with CCACCA and rapidly degraded. This chain is CCA-adding enzyme, found in Geobacillus kaustophilus (strain HTA426).